Reading from the N-terminus, the 368-residue chain is Peptide chain release factor 2 (368 aa).

Glutamine 245 carries the N5-methylglutamine modification.

The protein belongs to the prokaryotic/mitochondrial release factor family. Post-translationally, methylated by PrmC. Methylation increases the termination efficiency of RF2.

The protein resides in the cytoplasm. Its function is as follows. Peptide chain release factor 2 directs the termination of translation in response to the peptide chain termination codons UGA and UAA. In Treponema pallidum (strain Nichols), this protein is Peptide chain release factor 2 (prfB).